We begin with the raw amino-acid sequence, 360 residues long: Peptide chain release factor 1 (360 aa).

Gln235 is modified (N5-methylglutamine). Positions 291 to 308 (ASERRNLLGTGDRSDRNR) are enriched in basic and acidic residues. The interval 291–312 (ASERRNLLGTGDRSDRNRTYNF) is disordered.

This sequence belongs to the prokaryotic/mitochondrial release factor family. In terms of processing, methylated by PrmC. Methylation increases the termination efficiency of RF1.

The protein resides in the cytoplasm. Functionally, peptide chain release factor 1 directs the termination of translation in response to the peptide chain termination codons UAG and UAA. This Yersinia pseudotuberculosis serotype I (strain IP32953) protein is Peptide chain release factor 1.